Here is a 290-residue protein sequence, read N- to C-terminus: Ribosomal RNA small subunit methyltransferase A (290 aa).

The S-adenosyl-L-methionine site is built by Asn27, Leu29, Gly54, Glu75, Asp100, and Asn125.

Belongs to the class I-like SAM-binding methyltransferase superfamily. rRNA adenine N(6)-methyltransferase family. RsmA subfamily.

Its subcellular location is the cytoplasm. The enzyme catalyses adenosine(1518)/adenosine(1519) in 16S rRNA + 4 S-adenosyl-L-methionine = N(6)-dimethyladenosine(1518)/N(6)-dimethyladenosine(1519) in 16S rRNA + 4 S-adenosyl-L-homocysteine + 4 H(+). Specifically dimethylates two adjacent adenosines (A1518 and A1519) in the loop of a conserved hairpin near the 3'-end of 16S rRNA in the 30S particle. May play a critical role in biogenesis of 30S subunits. The chain is Ribosomal RNA small subunit methyltransferase A from Streptococcus pyogenes serotype M18 (strain MGAS8232).